A 390-amino-acid chain; its full sequence is Guanine nucleotide-binding protein alpha-7 subunit (390 aa).

2 stretches are compositionally biased toward low complexity: residues 1 to 12 (MSSTTTNTTTAT) and 22 to 42 (SSSP…MSPS). A disordered region spans residues 1 to 42 (MSSTTTNTTTATPAIQVNGNQSSSPQSPSSSTSTLSPPMSPS). Residues 70 to 390 (SELKLLLLGT…TRQTMEEGGI (321 aa)) form the G-alpha domain. Positions 73–86 (KLLLLGTGDSGKST) are G1 motif. Residues 78-85 (GTGDSGKS), 213-219 (LYTRVAS), 238-242 (DVAGQ), 307-310 (NKRD), and alanine 363 each bind GTP. Serine 85 provides a ligand contact to Mg(2+). Residues 211 to 219 (DILYTRVAS) are G2 motif. Residues 234–243 (FRMIDVAGQR) form a G3 motif region. A G4 motif region spans residues 303–310 (ILFLNKRD). Positions 361–366 (TTATDT) are G5 motif.

It belongs to the G-alpha family. In terms of assembly, g proteins are composed of 3 units; alpha, beta and gamma. The alpha chain contains the guanine nucleotide binding site.

Functionally, guanine nucleotide-binding proteins (G proteins) are involved as modulators or transducers in various transmembrane signaling systems. This chain is Guanine nucleotide-binding protein alpha-7 subunit (gpaG), found in Dictyostelium discoideum (Social amoeba).